The following is a 539-amino-acid chain: Glucose-6-phosphate isomerase (539 aa).

Glu-340 acts as the Proton donor in catalysis. Catalysis depends on residues His-371 and Lys-500.

Belongs to the GPI family.

It localises to the cytoplasm. It catalyses the reaction alpha-D-glucose 6-phosphate = beta-D-fructose 6-phosphate. Its pathway is carbohydrate biosynthesis; gluconeogenesis. It functions in the pathway carbohydrate degradation; glycolysis; D-glyceraldehyde 3-phosphate and glycerone phosphate from D-glucose: step 2/4. Its function is as follows. Catalyzes the reversible isomerization of glucose-6-phosphate to fructose-6-phosphate. This Ruegeria pomeroyi (strain ATCC 700808 / DSM 15171 / DSS-3) (Silicibacter pomeroyi) protein is Glucose-6-phosphate isomerase.